Consider the following 251-residue polypeptide: Ubiquinone/menaquinone biosynthesis C-methyltransferase UbiE (251 aa).

S-adenosyl-L-methionine is bound by residues Thr-74, Asp-95, and 123 to 124 (NA).

It belongs to the class I-like SAM-binding methyltransferase superfamily. MenG/UbiE family.

It catalyses the reaction a 2-demethylmenaquinol + S-adenosyl-L-methionine = a menaquinol + S-adenosyl-L-homocysteine + H(+). It carries out the reaction a 2-methoxy-6-(all-trans-polyprenyl)benzene-1,4-diol + S-adenosyl-L-methionine = a 5-methoxy-2-methyl-3-(all-trans-polyprenyl)benzene-1,4-diol + S-adenosyl-L-homocysteine + H(+). Its pathway is quinol/quinone metabolism; menaquinone biosynthesis; menaquinol from 1,4-dihydroxy-2-naphthoate: step 2/2. It participates in cofactor biosynthesis; ubiquinone biosynthesis. Its function is as follows. Methyltransferase required for the conversion of demethylmenaquinol (DMKH2) to menaquinol (MKH2) and the conversion of 2-polyprenyl-6-methoxy-1,4-benzoquinol (DDMQH2) to 2-polyprenyl-3-methyl-6-methoxy-1,4-benzoquinol (DMQH2). The polypeptide is Ubiquinone/menaquinone biosynthesis C-methyltransferase UbiE (Shewanella putrefaciens (strain CN-32 / ATCC BAA-453)).